Consider the following 233-residue polypeptide: 2-amino-5-formylamino-6-ribosylaminopyrimidin-4(3H)-one 5'-monophosphate deformylase (233 aa).

Residues Glu-33, His-35, Asp-44, and His-114 each contribute to the Fe cation site.

It belongs to the creatininase superfamily. FAPy deformylase family. Homodimer. Requires Fe(2+) as cofactor. The cofactor is Zn(2+).

It catalyses the reaction 2-amino-5-formylamino-6-(5-phospho-D-ribosylamino)pyrimidin-4(3H)-one + H2O = 2,5-diamino-6-(1-D-ribosylamino)pyrimidin-4(3H)-one 5'-phosphate + formate + H(+). Its pathway is cofactor biosynthesis; coenzyme F420 biosynthesis. The protein operates within cofactor biosynthesis; riboflavin biosynthesis. In terms of biological role, catalyzes the hydrolysis of the formamide of 2-amino-5-formylamino-6-ribosylamino-4(3H)-pyrimidinone 5'-monophosphate (FAPy) to form 2,5-diamino-6-ribosylamino-4(3H)-pyrimidinone 5'-phosphate (APy). In Methanosphaera stadtmanae (strain ATCC 43021 / DSM 3091 / JCM 11832 / MCB-3), this protein is 2-amino-5-formylamino-6-ribosylaminopyrimidin-4(3H)-one 5'-monophosphate deformylase.